The primary structure comprises 82 residues: MTFPRALTVIDDNGMVISIIFWFLLIIILILLSIALLNIIKLCMVCCNLGRTVIIVPVQHAYDAYKNFMRIKAYNPDGALLV.

At 1-19 (MTFPRALTVIDDNGMVISI) the chain is on the virion surface side. The chain crosses the membrane as a helical span at residues 20–40 (IFWFLLIIILILLSIALLNII). The Intravirion portion of the chain corresponds to 41-82 (KLCMVCCNLGRTVIIVPVQHAYDAYKNFMRIKAYNPDGALLV).

It belongs to the alphacoronaviruses E protein family. In terms of assembly, homopentamer. Interacts with membrane protein M in the budding compartment of the host cell, which is located between endoplasmic reticulum and the Golgi complex. Interacts with Nucleoprotein.

It is found in the host Golgi apparatus membrane. Functionally, plays a central role in virus morphogenesis and assembly. Acts as a viroporin and self-assembles in host membranes forming pentameric protein-lipid pores that allow ion transport. Also plays a role in the induction of apoptosis. The sequence is that of Envelope small membrane protein from Sus scrofa (Pig).